The sequence spans 194 residues: ATP synthase subunit b 1 (194 aa).

A helical membrane pass occupies residues 1-21 (MLLGTVVTVLSTLPAIAYAMD).

This sequence belongs to the ATPase B chain family. As to quaternary structure, F-type ATPases have 2 components, F(1) - the catalytic core - and F(0) - the membrane proton channel. F(1) has five subunits: alpha(3), beta(3), gamma(1), delta(1), epsilon(1). F(0) has three main subunits: a(1), b(2) and c(10-14). The alpha and beta chains form an alternating ring which encloses part of the gamma chain. F(1) is attached to F(0) by a central stalk formed by the gamma and epsilon chains, while a peripheral stalk is formed by the delta and b chains.

The protein localises to the cell inner membrane. F(1)F(0) ATP synthase produces ATP from ADP in the presence of a proton or sodium gradient. F-type ATPases consist of two structural domains, F(1) containing the extramembraneous catalytic core and F(0) containing the membrane proton channel, linked together by a central stalk and a peripheral stalk. During catalysis, ATP synthesis in the catalytic domain of F(1) is coupled via a rotary mechanism of the central stalk subunits to proton translocation. Functionally, component of the F(0) channel, it forms part of the peripheral stalk, linking F(1) to F(0). The sequence is that of ATP synthase subunit b 1 from Granulibacter bethesdensis (strain ATCC BAA-1260 / CGDNIH1).